The primary structure comprises 256 residues: MNNDVFPNKFKAALAAKQVQIGCWSALSNPISTEVLGLAGFDWLVLDGEHAPNDISTFIPQLMALKGSASAPVVRVPTNEPVIIKRLLDIGFYNFLIPFVETKEEAEQAVASTRYPPEGIRGVSVSHRANMFGTVADYFAQSNKNITILVQIESQQGVDNVDAIAATEGVDGIFVGPSDLAAALGHLGNASHPDVQKAIQHIFNRASAHGKPSGILAPVEADARRYLEWGATFVAVGSDLGVFRSATQKLADTFKK.

The Proton acceptor role is filled by H50. Residue Q151 coordinates substrate. Mg(2+) is bound at residue E153. Residues S178 and D179 each coordinate substrate. Residue D179 participates in Mg(2+) binding.

It belongs to the HpcH/HpaI aldolase family. KDGluc aldolase subfamily. In terms of assembly, homohexamer; trimer of dimers. The cofactor is Mg(2+).

The enzyme catalyses 5-dehydro-4-deoxy-D-glucarate = 2-hydroxy-3-oxopropanoate + pyruvate. It catalyses the reaction 2-dehydro-3-deoxy-D-glucarate = 2-hydroxy-3-oxopropanoate + pyruvate. Its pathway is carbohydrate acid metabolism; galactarate degradation; D-glycerate from galactarate: step 2/3. Catalyzes the reversible retro-aldol cleavage of both 5-keto-4-deoxy-D-glucarate and 2-keto-3-deoxy-D-glucarate to pyruvate and tartronic semialdehyde. This Shigella boydii serotype 4 (strain Sb227) protein is 5-keto-4-deoxy-D-glucarate aldolase.